A 92-amino-acid polypeptide reads, in one-letter code: PqqA binding protein (92 aa).

It belongs to the PqqD family. In terms of assembly, monomer. Interacts with PqqE.

The protein operates within cofactor biosynthesis; pyrroloquinoline quinone biosynthesis. Its function is as follows. Functions as a PqqA binding protein and presents PqqA to PqqE, in the pyrroloquinoline quinone (PQQ) biosynthetic pathway. This chain is PqqA binding protein, found in Xanthomonas oryzae pv. oryzae (strain MAFF 311018).